A 276-amino-acid chain; its full sequence is AT-hook motif nuclear-localized protein 17 (276 aa).

Residues 1-10 show a composition bias toward basic and acidic residues; it reads MKGEYREQKS. Disordered regions lie at residues 1 to 80 and 212 to 248; these read MKGE…RDTD and AEEEQKHSAGTGEREGQSPPVSGGGEESGQMAGSGGE. 2 stretches are compositionally biased toward low complexity: residues 20–31 and 40–49; these read HQQQQQQQQQQH and SSTVTPTVDD. A DNA-binding region (a.T hook) is located at residues 56-68; the sequence is RRPRGRPPGSKNK. Residues 80–230 enclose the PPC domain; it reads DPPMSPYILE…GTGEREGQSP (151 aa). Over residues 212 to 227 the composition is skewed to basic and acidic residues; the sequence is AEEEQKHSAGTGEREG. Gly residues predominate over residues 233 to 248; it reads SGGGEESGQMAGSGGE.

The protein localises to the nucleus. Its function is as follows. Transcription factor that specifically binds AT-rich DNA sequences related to the nuclear matrix attachment regions (MARs). This Arabidopsis thaliana (Mouse-ear cress) protein is AT-hook motif nuclear-localized protein 17.